A 220-amino-acid chain; its full sequence is PRA1 family protein B4 (220 aa).

The tract at residues 1-27 (MASSAPPVLPISNPQTVPSAAPSSVES) is disordered. Polar residues predominate over residues 12–27 (SNPQTVPSAAPSSVES). Helical transmembrane passes span 83–103 (YSYFKVNYLTVATAIVGFSLV), 105–125 (HPFSLVFLLCLLASWLFLYLF), 146–166 (GCLILFSIFVIFLTDVGSVLV), 170–190 (MIGVALICAHGAFRAPEDLFL), and 196–216 (AATGFLSFLGGAASSAAPAVI).

It belongs to the PRA1 family. In terms of assembly, interacts with PRA1B1, PRA1B2, PRA1B3, PRA1B5, PRA1B6 and PRA1E. In terms of tissue distribution, expressed in roots, lateral roots, lateral root caps, stomata and trichomes.

Its subcellular location is the endosome membrane. In terms of biological role, may be involved in both secretory and endocytic intracellular trafficking in the endosomal/prevacuolar compartments. This is PRA1 family protein B4 (PRA1B4) from Arabidopsis thaliana (Mouse-ear cress).